Reading from the N-terminus, the 302-residue chain is 4-hydroxy-tetrahydrodipicolinate synthase (302 aa).

Residue T55 coordinates pyruvate. The active-site Proton donor/acceptor is the Y144. K172 functions as the Schiff-base intermediate with substrate in the catalytic mechanism. Position 214 (V214) interacts with pyruvate.

Belongs to the DapA family. In terms of assembly, homotetramer; dimer of dimers.

Its subcellular location is the cytoplasm. The enzyme catalyses L-aspartate 4-semialdehyde + pyruvate = (2S,4S)-4-hydroxy-2,3,4,5-tetrahydrodipicolinate + H2O + H(+). It functions in the pathway amino-acid biosynthesis; L-lysine biosynthesis via DAP pathway; (S)-tetrahydrodipicolinate from L-aspartate: step 3/4. Its function is as follows. Catalyzes the condensation of (S)-aspartate-beta-semialdehyde [(S)-ASA] and pyruvate to 4-hydroxy-tetrahydrodipicolinate (HTPA). In Prochlorococcus marinus (strain NATL2A), this protein is 4-hydroxy-tetrahydrodipicolinate synthase.